We begin with the raw amino-acid sequence, 787 residues long: Integrin beta-3 (787 aa).

An N-terminal signal peptide occupies residues 1 to 25; sequence MRTRRPGQLWATLLALGALAGVVVG. Residues 27–717 are Extracellular-facing; sequence SNICTTRGVN…EEPECPKGPD (691 aa). A PSI domain is found at 29 to 75; sequence ICTTRGVNSCQQCLAVSPVCAWCSDESLPQNSPRCNLKKNLLKDKCS. Cystine bridges form between cysteine 30/cysteine 48, cysteine 38/cysteine 460, cysteine 41/cysteine 63, cysteine 51/cysteine 74, cysteine 202/cysteine 209, cysteine 257/cysteine 298, cysteine 399/cysteine 411, cysteine 431/cysteine 458, cysteine 462/cysteine 482, cysteine 473/cysteine 485, cysteine 487/cysteine 496, cysteine 498/cysteine 528, cysteine 511/cysteine 526, cysteine 520/cysteine 531, cysteine 533/cysteine 546, cysteine 548/cysteine 569, cysteine 553/cysteine 567, cysteine 561/cysteine 572, and cysteine 574/cysteine 583. The VWFA domain maps to 134–376; it reads DYPVDIYYLM…QLIVDAYGKI (243 aa). Residues serine 146 and serine 148 each coordinate Mg(2+). The Ca(2+) site is built by serine 148, aspartate 151, aspartate 152, and aspartate 183. The segment at 202-209 is CX3CL1-binding; that stretch reads CYTMKSTC. Residues 202 to 209 form an involved in CX3CL1-, NRG1-, FGF1- and IGF1-binding region; sequence CYTMKSTC. The Ca(2+) site is built by asparagine 240, aspartate 242, proline 244, glutamate 245, and aspartate 276. Glutamate 245 provides a ligand contact to Mg(2+). The interval 292–312 is CX3CL1-binding; sequence LPNDGRCHIGPDNHYSASTTM. N-linked (GlcNAc...) asparagine glycosylation is found at asparagine 345 and asparagine 396. I-EGF domains are found at residues 462–497, 498–547, 548–584, and 585–624; these read CQAF…SMCE, CSEE…KYCE, CDDF…YYCN, and CTTR…DTCE. An N-linked (GlcNAc...) asparagine glycan is attached at asparagine 477. A glycan (N-linked (GlcNAc...) asparagine) is linked at asparagine 584. 9 disulfide bridges follow: cysteine 585–cysteine 608, cysteine 592–cysteine 606, cysteine 600–cysteine 611, cysteine 613–cysteine 623, cysteine 626–cysteine 629, cysteine 633–cysteine 680, cysteine 639–cysteine 660, cysteine 642–cysteine 656, and cysteine 688–cysteine 712. Asparagine 679 is a glycosylation site (N-linked (GlcNAc...) asparagine). Residues 718-738 traverse the membrane as a helical segment; sequence ILVVLLSVMGAILLIGLATLL. The Cytoplasmic segment spans residues 739 to 787; sequence IWKLLITIHDRKEFAKFEEERARAKWDTANNPLYKEATSTFTNITYRGT. Threonine 766 carries the phosphothreonine modification. At tyrosine 772 the chain carries Phosphotyrosine. The short motif at 776–782 is the LIR element; that stretch reads TSTFTNI. Position 778 is a phosphothreonine (threonine 778). At tyrosine 784 the chain carries Phosphotyrosine.

This sequence belongs to the integrin beta chain family. As to quaternary structure, heterodimer of an alpha and a beta subunit. Beta-3 (ITGB3) associates with either alpha-IIB (ITGA2B) or alpha-V (ITGAV). Interacts with FLNB and COMP. Interacts with PDIA6 following platelet stimulation. Interacts with SYK; upon activation by ITGB3 promotes platelet adhesion. Interacts with MYO10. Interacts with DAB2. Interacts with FERMT2. Integrin ITGAV:ITGB3 interacts with FBLN5 (via N-terminus). Interacts with EMP2; regulates the levels of the heterodimer ITGA5:ITGB3 integrin expression on the plasma membrane. ITGAV:ITGB3 interacts with CCN3. ITGAV:ITGB3 and ITGA2B:ITGB3 interact with SELP (via C-type lectin domain); the interaction mediates cell-cell interaction and adhesion. ITGAV:ITGB3 interacts with AGRA2. ITGAV:ITGB3 is found in a ternary complex with CX3CR1 and CX3CL1. ITGAV:ITGB3 is found in a ternary complex with NRG1 and ERBB3. ITGAV:ITGB3 is found in a ternary complex with FGF1 and FGFR1. ITGAV:ITGB3 interacts with FGF2; it is likely that FGF2 can simultaneously bind ITGAV:ITGB3 and FGF receptors. ITGAV:ITGB3 binds to IL1B. ITGAV:ITGB3 is found in a ternary complex with IGF1 and IGF1R. ITGAV:ITGB3 interacts with IGF2. ITGAV:ITGB3 interacts with FBN1. ITGAV:ITGB3 interacts with CD9, CD81 and CD151 (via second extracellular domain). Interacts (via the allosteric site (site 2)) with CXCL12 in a CXCR4-independent manner. Interacts with MXRA8/DICAM; the interaction inhibits ITGAV:ITGB3 heterodimer formation. ITGAV:ITGB3 interacts with PTN. Forms a complex with PTPRZ1 and PTN that stimulates endothelial cell migration through ITGB3 Tyr-772 phosphorylation. ITGAV:ITGB3 interacts with SLC6A4. Interacts with SLC6A4 (via C-terminus); this interaction regulates SLC6A4 trafficking. ITGA2B:ITGB3 interacts with PPIA/CYPA; the interaction is ROS and PPIase activity-dependent and is increased in the presence of thrombin. Interacts with tensin TNS3; TNS3 also interacts with PEAK1, thus acting as an adapter molecule to bridge the association of PEAK1 with ITGB3. Interacts with TM4SF19. Phosphorylated on tyrosine residues in response to thrombin-induced platelet aggregation. Probably involved in outside-in signaling.

It is found in the cell membrane. The protein resides in the cell projection. The protein localises to the lamellipodium membrane. Its subcellular location is the cell junction. It localises to the focal adhesion. It is found in the postsynaptic cell membrane. The protein resides in the synapse. Integrin alpha-V/beta-3 (ITGAV:ITGB3) is a receptor for cytotactin, fibronectin, laminin, matrix metalloproteinase-2, osteopontin, osteomodulin, prothrombin, thrombospondin, vitronectin and von Willebrand factor. Integrin alpha-IIB/beta-3 (ITGA2B:ITGB3) is a receptor for fibronectin, fibrinogen, plasminogen, prothrombin, thrombospondin and vitronectin. Integrins alpha-IIB/beta-3 and alpha-V/beta-3 recognize the sequence R-G-D in a wide array of ligands. Integrin alpha-IIB/beta-3 recognizes the sequence H-H-L-G-G-G-A-K-Q-A-G-D-V in fibrinogen gamma chain. Following activation integrin alpha-IIB/beta-3 brings about platelet/platelet interaction through binding of soluble fibrinogen. This step leads to rapid platelet aggregation which physically plugs ruptured endothelial surfaces. Fibrinogen binding enhances SELP expression in activated platelets. ITGAV:ITGB3 binds to fractalkine (CX3CL1) and acts as its coreceptor in CX3CR1-dependent fractalkine signaling. ITGAV:ITGB3 binds to NRG1 (via EGF domain) and this binding is essential for NRG1-ERBB signaling. ITGAV:ITGB3 binds to FGF1 and this binding is essential for FGF1 signaling. ITGAV:ITGB3 binds to FGF2 and this binding is essential for FGF2 signaling. ITGAV:ITGB3 binds to IGF1 and this binding is essential for IGF1 signaling. ITGAV:ITGB3 binds to IGF2 and this binding is essential for IGF2 signaling. ITGAV:ITGB3 binds to IL1B and this binding is essential for IL1B signaling. ITGAV:ITGB3 binds to PLA2G2A via a site (site 2) which is distinct from the classical ligand-binding site (site 1) and this induces integrin conformational changes and enhanced ligand binding to site 1. ITGAV:ITGB3 acts as a receptor for fibrillin-1 (FBN1) and mediates R-G-D-dependent cell adhesion to FBN1. In brain, plays a role in synaptic transmission and plasticity. Involved in the regulation of the serotonin neurotransmission, is required to localize to specific compartments within the synapse the serotonin receptor SLC6A4 and for an appropriate reuptake of serotonin. Controls excitatory synaptic strength by regulating GRIA2-containing AMPAR endocytosis, which affects AMPAR abundance and composition. ITGAV:ITGB3 acts as a receptor for CD40LG. ITGAV:ITGB3 acts as a receptor for IBSP and promotes cell adhesion and migration to IBSP. In Rattus norvegicus (Rat), this protein is Integrin beta-3.